Here is a 122-residue protein sequence, read N- to C-terminus: MSLLKEFKEFAVKGNVLDLAVAVVIGAAFGKIVSSLVADVIMPIIGLIFGNTDFASSWAYKGIKYGVFIQSIVDFLIVAGAIFLFIKLINKITRKSEVEEVEEAVEENTVLLTEIRDLLRSK.

2 helical membrane-spanning segments follow: residues 29–49 and 66–86; these read FGKIVSSLVADVIMPIIGLIF and GVFIQSIVDFLIVAGAIFLFI.

It belongs to the MscL family. In terms of assembly, homopentamer.

The protein resides in the cell membrane. Channel that opens in response to stretch forces in the membrane lipid bilayer. May participate in the regulation of osmotic pressure changes within the cell. The chain is Large-conductance mechanosensitive channel from Macrococcus caseolyticus (strain JCSC5402) (Macrococcoides caseolyticum).